A 1340-amino-acid chain; its full sequence is DNA-directed RNA polymerase subunit beta (1340 aa).

Belongs to the RNA polymerase beta chain family. The RNAP catalytic core consists of 2 alpha, 1 beta, 1 beta' and 1 omega subunit. When a sigma factor is associated with the core the holoenzyme is formed, which can initiate transcription.

It carries out the reaction RNA(n) + a ribonucleoside 5'-triphosphate = RNA(n+1) + diphosphate. DNA-dependent RNA polymerase catalyzes the transcription of DNA into RNA using the four ribonucleoside triphosphates as substrates. The polypeptide is DNA-directed RNA polymerase subunit beta (Baumannia cicadellinicola subsp. Homalodisca coagulata).